The following is a 474-amino-acid chain: bZIP transcription factor hapX (474 aa).

Polar residues predominate over residues 1–10 (MSTSAGTPTS). The segment at 1 to 82 (MSTSAGTPTS…RKAQNRAAQR (82 aa)) is disordered. The bZIP domain maps to 67-108 (DTPPTKRKAQNRAAQRAFRERRAARVGELEEQIKKIEEENER). The basic motif stretch occupies residues 72 to 91 (KRKAQNRAAQRAFRERRAAR). Residues 95 to 102 (LEEQIKKI) are leucine-zipper. Disordered stretches follow at residues 201-242 (QMQT…TDFT), 282-317 (EDQP…GDVL), and 429-449 (TLPN…LTNR). Polar residues predominate over residues 287-307 (DRSNQPSQLTKLPPIQNISQF).

It belongs to the bZIP family. YAP subfamily.

The protein localises to the nucleus. Iron regulator crucial for the adaptation to iron starvation and iron excess, but is dispensable for virulence. SreA represses the expression of hapX and the siderophore system during iron sufficient conditions by an iron-sensing mechanism, while hapX represses sreA and activates the siderophore system during iron-limiting conditions, resulting in efficient iron uptake and inhibition of iron-consuming pathways. HapX targets include genes encoding a number of key iron-regulated factors such as the vacuolar iron importer cccA, as well as hemA, cycA and lysF involved in heme biosynthesis, respiration and lysine biosynthesis, respectively. Activation of the vacuolar iron importer cccA during high iron conditions is essential for iron detoxification. This is bZIP transcription factor hapX from Arthroderma benhamiae (strain ATCC MYA-4681 / CBS 112371) (Trichophyton mentagrophytes).